A 482-amino-acid polypeptide reads, in one-letter code: MSQESSQKLRLGALTALVVGSMIGGGIFSLPQNMAASADVGAVLIGWAITAVGMLTLAFVFQTLANRKPELDGGVYAYAKAGFGDYMGFSSAWGYWISAWLGNVGYFVLLFSTLGYFFPIFGKGDTVAAIVCASVLLWALHFLVLRGIKEAAFINTVTTVAKVVPLFLFILICLFAFKLDIFTADIWGKSNPDLGSVMNQVRNMMLVTVWVFIGIEGASIFSSRAEKRSDVGKATVIGFITVLLLLVLVNVLSMGVMTQPELAKLQNPSMALVLEHVVGHWGAVLISVGLLISLLGALLSWVLLCAEIMFAAAKDHTMPEFLRRENANQVPANALWLTNICVQVFLVVVFFTSGDPDGMDPYTKMLLLATSMILIPYFWSAAYGLLLTLKGETYENDARERSKDLVIAGIAVAYAVWLLYAGGLKYLLLSALLYAPGAILFAKAKHEVGQPIFTGIEKLIFAAVVIGALVAAYGLYDGFLTL.

Over 1-10 the chain is Cytoplasmic; sequence MSQESSQKLR. Residues 11-31 traverse the membrane as a helical segment; that stretch reads LGALTALVVGSMIGGGIFSLP. The Periplasmic portion of the chain corresponds to 32–40; it reads QNMAASADV. Residues 41–61 traverse the membrane as a helical segment; it reads GAVLIGWAITAVGMLTLAFVF. Topologically, residues 62–100 are cytoplasmic; it reads QTLANRKPELDGGVYAYAKAGFGDYMGFSSAWGYWISAW. Residues 101-121 form a helical membrane-spanning segment; it reads LGNVGYFVLLFSTLGYFFPIF. Residues 122 to 124 lie on the Periplasmic side of the membrane; it reads GKG. Residues 125–145 form a helical membrane-spanning segment; the sequence is DTVAAIVCASVLLWALHFLVL. Topologically, residues 146–156 are cytoplasmic; sequence RGIKEAAFINT. A helical transmembrane segment spans residues 157–177; it reads VTTVAKVVPLFLFILICLFAF. The Periplasmic portion of the chain corresponds to 178 to 202; sequence KLDIFTADIWGKSNPDLGSVMNQVR. A helical membrane pass occupies residues 203–223; that stretch reads NMMLVTVWVFIGIEGASIFSS. Residues 224 to 235 are Cytoplasmic-facing; the sequence is RAEKRSDVGKAT. Residues 236 to 256 traverse the membrane as a helical segment; it reads VIGFITVLLLLVLVNVLSMGV. Over 257–283 the chain is Periplasmic; the sequence is MTQPELAKLQNPSMALVLEHVVGHWGA. A helical transmembrane segment spans residues 284-304; that stretch reads VLISVGLLISLLGALLSWVLL. The Cytoplasmic segment spans residues 305–333; sequence CAEIMFAAAKDHTMPEFLRRENANQVPAN. A helical transmembrane segment spans residues 334–354; that stretch reads ALWLTNICVQVFLVVVFFTSG. The Periplasmic segment spans residues 355-365; sequence DPDGMDPYTKM. The chain crosses the membrane as a helical span at residues 366 to 386; it reads LLLATSMILIPYFWSAAYGLL. Residues 387-403 are Cytoplasmic-facing; the sequence is LTLKGETYENDARERSK. Residues 404 to 424 form a helical membrane-spanning segment; sequence DLVIAGIAVAYAVWLLYAGGL. A topological domain (periplasmic) is located at residue Lys425. The helical transmembrane segment at 426 to 446 threads the bilayer; that stretch reads YLLLSALLYAPGAILFAKAKH. At 447-458 the chain is on the cytoplasmic side; that stretch reads EVGQPIFTGIEK. A helical transmembrane segment spans residues 459 to 479; it reads LIFAAVVIGALVAAYGLYDGF. Residues 480–482 are Periplasmic-facing; it reads LTL.

Belongs to the amino acid-polyamine-organocation (APC) superfamily. Basic amino acid/polyamine antiporter (APA) (TC 2.A.3.2) family.

The protein localises to the cell inner membrane. It catalyses the reaction L-ornithine(in) + L-arginine(out) = L-ornithine(out) + L-arginine(in). Catalyzes electroneutral exchange between arginine and ornithine to allow high-efficiency energy conversion in the arginine deiminase pathway. Also mediates the proton motive force-driven uptake of arginine and ornithine, but the exchange is several orders of magnitude faster than the proton motive force-driven transport. The sequence is that of Arginine/ornithine antiporter from Pseudomonas aeruginosa (strain ATCC 15692 / DSM 22644 / CIP 104116 / JCM 14847 / LMG 12228 / 1C / PRS 101 / PAO1).